We begin with the raw amino-acid sequence, 124 residues long: UPF0299 membrane protein VIBHAR_02118 (124 aa).

The next 4 helical transmembrane spans lie at 6–26 (LLQL…LGIG), 35–55 (VSVP…TLGL), 72–92 (MILL…MLLA), and 95–115 (LPII…LAWF).

Belongs to the UPF0299 family.

It is found in the cell inner membrane. The sequence is that of UPF0299 membrane protein VIBHAR_02118 from Vibrio campbellii (strain ATCC BAA-1116).